A 131-amino-acid chain; its full sequence is Large ribosomal subunit protein bL12 (131 aa).

This sequence belongs to the bacterial ribosomal protein bL12 family. In terms of assembly, homodimer. Part of the ribosomal stalk of the 50S ribosomal subunit. Forms a multimeric L10(L12)X complex, where L10 forms an elongated spine to which 2 to 4 L12 dimers bind in a sequential fashion. Binds GTP-bound translation factors.

Its function is as follows. Forms part of the ribosomal stalk which helps the ribosome interact with GTP-bound translation factors. Is thus essential for accurate translation. This is Large ribosomal subunit protein bL12 from Nocardioides sp. (strain ATCC BAA-499 / JS614).